Consider the following 634-residue polypeptide: Pescadillo homolog (634 aa).

In terms of domain architecture, BRCT spans 321-414 (RLRTLFKGLK…QLLPTNKYFM (94 aa)). Disordered regions lie at residues 437–473 (EEKA…EEIE), 491–561 (EYKK…RKAE), and 603–634 (NIDA…LKMA). The residue at position 453 (serine 453) is a Phosphoserine. Composition is skewed to acidic residues over residues 454 to 473 (DDDD…EEIE) and 501 to 527 (VNED…DVEQ). 2 coiled-coil regions span residues 460-546 (SDAE…KVES) and 596-629 (LLRK…AAAK). Composition is skewed to basic and acidic residues over residues 528–548 (LDDK…ESGK) and 603–623 (NIDA…KKAA). Low complexity predominate over residues 624–634 (AEAAAKALKMA).

Belongs to the pescadillo family.

It localises to the nucleus. The protein resides in the nucleolus. The protein localises to the nucleoplasm. In terms of biological role, required for maturation of ribosomal RNAs and formation of the large ribosomal subunit. The protein is Pescadillo homolog of Drosophila willistoni (Fruit fly).